The primary structure comprises 1219 residues: A disintegrin and metalloproteinase with thrombospondin motifs 18 (1219 aa).

The signal sequence occupies residues 1-47; that stretch reads MECALLCLCALRAAGPGPPWGPAGLGRLAKALQLCCFCCASVAVALA. A propeptide spanning residues 48-284 is cleaved from the precursor; it reads SDSGSSGGSG…EYGGTGRPRR (237 aa). N-linked (GlcNAc...) asparagine glycans are attached at residues Asn-151 and Asn-190. Residues 217-248 are disordered; it reads YPGSQRTYPGHSPSHTPPASQSQEPEYSHRRW. Polar residues predominate over residues 218–241; sequence PGSQRTYPGHSPSHTPPASQSQEP. The Peptidase M12B domain maps to 293-498; sequence LNVETLVVAD…PQAGCLVDEP (206 aa). 11 disulfide bridges follow: Cys-369–Cys-420, Cys-395–Cys-402, Cys-414–Cys-493, Cys-453–Cys-477, Cys-521–Cys-546, Cys-532–Cys-553, Cys-541–Cys-572, Cys-566–Cys-577, Cys-601–Cys-638, Cys-605–Cys-643, and Cys-616–Cys-628. His-436 contributes to the Zn(2+) binding site. The active site involves Glu-437. Zn(2+)-binding residues include His-440 and His-446. One can recognise a TSP type-1 1 domain in the interval 589 to 644; it reads HGQWSAWSKWSECSRTCGGGVKFQERHCSNPKPQYGGKYCPGSSRIYKLCNINPCP. Residues Asn-745, Asn-838, Asn-865, and Asn-909 are each glycosylated (N-linked (GlcNAc...) asparagine). TSP type-1 domains follow at residues 931–990, 991–1049, 1052–1116, and 1121–1176; these read CPAY…NSHA, CPPE…GRCP, NRLQ…RTCP, and AVAS…NFCP. The 38-residue stretch at 1182 to 1219 folds into the PLAC domain; that stretch reads DDPSCVDFFSWCHLVPQHGVCNHKFYGKQCCRSCTRKS.

Zn(2+) is required as a cofactor. In terms of processing, the precursor is cleaved by a furin endopeptidase. Glycosylated. Can be O-fucosylated by POFUT2 on a serine or a threonine residue found within the consensus sequence C1-X(2)-(S/T)-C2-G of the TSP type-1 repeat domains where C1 and C2 are the first and second cysteine residue of the repeat, respectively. Fucosylated repeats can then be further glycosylated by the addition of a beta-1,3-glucose residue by the glucosyltransferase, B3GALTL. Fucosylation mediates the efficient secretion of ADAMTS family members. Can also be C-glycosylated with one or two mannose molecules on tryptophan residues within the consensus sequence W-X-X-W of the TPRs, and N-glycosylated. These other glycosylations can also facilitate secretion.

Its subcellular location is the secreted. The protein resides in the extracellular space. It localises to the extracellular matrix. The polypeptide is A disintegrin and metalloproteinase with thrombospondin motifs 18 (Adamts18) (Mus musculus (Mouse)).